A 157-amino-acid polypeptide reads, in one-letter code: uncharacterized protein (157 aa).

One can recognise an HTH marR-type domain in the interval 6 to 157 (HDELFQAIQQ…AFFNLWIKYM (152 aa)). The segment at residues 66–89 (NSFLASRLHISKAAVSKAVHALLK) is a DNA-binding region (H-T-H motif).

The protein localises to the cytoplasm. This is an uncharacterized protein from Bacillus subtilis (strain 168).